The sequence spans 405 residues: Argininosuccinate synthase (405 aa).

ATP is bound by residues 10-18 (AYSGGLDTS) and Ala-37. 2 residues coordinate L-citrulline: Tyr-88 and Ser-93. An ATP-binding site is contributed by Gly-118. 3 residues coordinate L-aspartate: Thr-120, Asn-124, and Asp-125. An L-citrulline-binding site is contributed by Asn-124. Residues Arg-128, Ser-179, Ser-188, Glu-264, and Tyr-276 each contribute to the L-citrulline site.

Belongs to the argininosuccinate synthase family. Type 1 subfamily. Homotetramer.

It is found in the cytoplasm. It catalyses the reaction L-citrulline + L-aspartate + ATP = 2-(N(omega)-L-arginino)succinate + AMP + diphosphate + H(+). The protein operates within amino-acid biosynthesis; L-arginine biosynthesis; L-arginine from L-ornithine and carbamoyl phosphate: step 2/3. This chain is Argininosuccinate synthase, found in Pseudomonas entomophila (strain L48).